The primary structure comprises 524 residues: Keratin, type II cytoskeletal 72 (524 aa).

Residues 1–136 (MSRQLNLYPG…DPEIQKVRAQ (136 aa)) form a head region. The interval 137–172 (EREQIKALNNKFASFIDKVRFLEQQNQVLGTKWELL) is coil 1A. An IF rod domain is found at 137–450 (EREQIKALNN…KLLEGEECRM (314 aa)). Residues 173–191 (QQLDLNNCKNNLEPILEGY) form a linker 1 region. The interval 192-283 (TSNLRKQLEM…CLYEGEIAQL (92 aa)) is coil 1B. A linker 12 region spans residues 284-307 (QSHISDTSVILSMDNNRDLDLDSI). The interval 308–446 (IAQVRAQYEE…ATYRKLLEGE (139 aa)) is coil 2. The tail stretch occupies residues 447–524 (ECRMSGEYPN…SSCATKKASR (78 aa)). Positions 495-524 (KTKGSCGGSELKDAPAKTSGSSCATKKASR) are disordered.

Belongs to the intermediate filament family. In terms of assembly, heterotetramer of two type I and two type II keratins.

In terms of biological role, has a role in hair formation. Specific component of keratin intermediate filaments in the inner root sheath (IRS) of the hair follicle. This is Keratin, type II cytoskeletal 72 (KRT72) from Bos taurus (Bovine).